Consider the following 179-residue polypeptide: uncharacterized protein (179 aa).

This is an uncharacterized protein from Sulfolobus islandicus rod-shaped virus 1 (SIRV-1).